The primary structure comprises 119 residues: MIQKNAILDVADNSGARKVLCIGFLGGKKSATVGDVIVVSAKVAAPKGRVTKGKVYKAVIVRVKGPIRRLDGSIIRFSSNAVVLVNDQGDPLGTRVFGPVRKFPVGEFTKVMSLAVEVL.

It belongs to the universal ribosomal protein uL14 family. Part of the 50S ribosomal subunit. Forms a cluster with proteins L3 and L19. In the 70S ribosome, L14 and L19 interact and together make contacts with the 16S rRNA in bridges B5 and B8.

In terms of biological role, binds to 23S rRNA. Forms part of two intersubunit bridges in the 70S ribosome. This Anaplasma phagocytophilum (strain HZ) protein is Large ribosomal subunit protein uL14.